The primary structure comprises 444 residues: Enolase 1 (444 aa).

Substrate-binding residues include His165 and Glu174. Glu217 functions as the Proton donor in the catalytic mechanism. 2 residues coordinate substrate: Glu303 and Asp330. Catalysis depends on Lys355, which acts as the Proton acceptor. Substrate is bound by residues 382-385 (SHRS) and Lys406.

The protein belongs to the enolase family. In terms of assembly, homodimer. Mg(2+) is required as a cofactor.

Its subcellular location is the cytoplasm. It catalyses the reaction (2R)-2-phosphoglycerate = phosphoenolpyruvate + H2O. It functions in the pathway carbohydrate degradation; glycolysis; pyruvate from D-glyceraldehyde 3-phosphate: step 4/5. The chain is Enolase 1 (ENO1) from Toxoplasma gondii.